The primary structure comprises 290 residues: Nucleotide-binding protein Bpet0443 (290 aa).

An ATP-binding site is contributed by 9–16; sequence GISGSGKS. Residue 58–61 coordinates GTP; that stretch reads DVRS.

It belongs to the RapZ-like family.

In terms of biological role, displays ATPase and GTPase activities. This chain is Nucleotide-binding protein Bpet0443, found in Bordetella petrii (strain ATCC BAA-461 / DSM 12804 / CCUG 43448).